Reading from the N-terminus, the 1073-residue chain is MKTPLLALALWSLLLQLGLTFWPSSVSQNCHNGSYEISVLMMNNSAFPESLDNLKAVVNEGVNIVRQRLLEAGLTVTVNATFVYSEGVIYKSSDCRSSTCEGLDLLRTISSEKRMGCVLLGPSCTYSTFQMYLDTDLNYPMISAGSFGLSCDYKETLTRLMSPARKLMYFLVDFWKVNNFPFKPFSWNTAYVFKNSTESEDCFWYLNALEAGVSYFSQKLSFKEMLRGNEEFQNILMDQNRKSNVIIMCGAPETVHTLKGGRAVAEDTVIILVDLFNDHYFMDNVTAPDYMKNVLVLTLPPENSVSNSSFSKDLSLVKNDFTLAYMNGVLLFGHMLKIFLEKREDVTTSKFAHAFRNITFEGHMGPVTLDNCGDIDNTMFLLYTSVDTSKYKVLLTYDTRKNYTNPVDKSPTFIWKNHKLPNDIPGRGPQILMIAVFTLTGTIVLLLLIALLVLRKYKREYALRQKKWSHIPPENIFPLESNETNHVSLKIDDDRRRDTIQRLRQCKYDKKRVILKDLKHNDGNFTEKQKIELNKLLQIDYYNLTKFYGTVKLDSMIFGVIEYCERGSLREVLNDTISYPDGTFMDWEFKISVLYDIAKGMSYLHSSKTEVHGRLKSTNCVVDSRMVVKITDFGCNSILAPKKDLWTAPEHLRRASVSQKGDVYSYGIIAQEIILRRETFYTLSCRDQKEKIFRVENSNGVKPFRPDLFLETAEEKELEVYLLVKNCWEEDPEKRPDFKKIENTLAKIFGLFHDQKNESYMDTLIRRLQLYSRNLEHLVEERTQLYKAERDRADRLNFMLLPRLVVKSLKEKGIVEPELYEEVTIYFSDIVGFTTICKYSTPMEVVDMLNDIYKSFDHILDHHDVYKVETIGDAYMVASGLPKRNGNRHAIDIAKMALDILSFMGTFELEHLPGLPIWIRIGIHSGPCAAGVVGIKMPRYCLFGDTVNTASRMESTGLPLRIHVSGSTIAILKRTECQFLYEVRGETYLKGRGTETTYWLTGVKDQEYNLPTPPTAENQQRLQAEFVDMIASSLQKRQASGIKNRKPTRVASYKKGTLEYLQLNTTDNESTHF.

Positions 1-23 (MKTPLLALALWSLLLQLGLTFWP) are cleaved as a signal peptide. The Extracellular segment spans residues 24–433 (SSVSQNCHNG…IPGRGPQILM (410 aa)). Asn32, Asn43, Asn79, Asn195, Asn284, Asn307, and Asn402 each carry an N-linked (GlcNAc...) asparagine glycan. The helical transmembrane segment at 434–454 (IAVFTLTGTIVLLLLIALLVL) threads the bilayer. The Cytoplasmic portion of the chain corresponds to 455 to 1073 (RKYKREYALR…NTTDNESTHF (619 aa)). The Protein kinase domain occupies 489–749 (LKIDDDRRRD…KIENTLAKIF (261 aa)). Positions 824-954 (TIYFSDIVGF…DTVNTASRME (131 aa)) constitute a Guanylate cyclase domain.

Belongs to the adenylyl cyclase class-4/guanylyl cyclase family. Homotrimer. Interacts via its C-terminal region with NHERF4. Interacts with the lectin chaperone VIP36. Post-translationally, glycosylation at Asn-79 is required for interaction with VIP36 while glycosylation at Asn-402 modulates ligand-mediated GC-C activation.

It is found in the cell membrane. The protein resides in the endoplasmic reticulum membrane. The catalysed reaction is GTP = 3',5'-cyclic GMP + diphosphate. In terms of biological role, guanylyl cyclase that catalyzes synthesis of cyclic GMP (cGMP) from GTP. This chain is Guanylyl cyclase C (GUCY2C), found in Sus scrofa (Pig).